A 345-amino-acid chain; its full sequence is Ryncolin-4 (345 aa).

The signal sequence occupies residues 1–19; that stretch reads MKPWAAFHLIFLVASSLEG. Residues 48-118 form a disordered region; sequence ILQSQPGIPG…DKGDKGEDCN (71 aa). Positions 57 to 114 constitute a Collagen-like domain; sequence GIPGVPGTNGSEGLKGDPGPQGPPGIRGPDGIRGEAGPKGDKGDQGDKGDKGDKGDKG. A compositionally biased stretch (basic and acidic residues) spans 86–116; the sequence is DGIRGEAGPKGDKGDQGDKGDKGDKGDKGED. A Fibrinogen C-terminal domain is found at 121–339; the sequence is DCLPTEVRNC…YADMKIRPQK (219 aa). Intrachain disulfides connect Cys130/Cys158 and Cys282/Cys295.

The protein belongs to the ficolin lectin family. Veficolin subfamily. In terms of processing, hydroxylated, possibly at Pro-80. Expressed by the venom duct.

It localises to the secreted. In terms of biological role, initiates complement activation and/or interferes in platelet aggregation and/or blood coagulation. The polypeptide is Ryncolin-4 (Cerberus rynchops (Dog-faced water snake)).